Consider the following 157-residue polypeptide: MPVDPEKLAKLQKSSAKKVGGSRVKAKKNIKTEQDDTKLIEALGKLKATKIEGVEEANFFREDGKVLHFNRVGVQGAPASNTFAFTGYPQEKNITQLIPQILPQLGAENLEILRQLAEQIQAGKTPKDFNTGSANAAADAGGEDIPDLVDQKFDDVE.

Residues 1-28 (MPVDPEKLAKLQKSSAKKVGGSRVKAKK) form a disordered region. In terms of domain architecture, NAC-A/B spans 33 to 98 (EQDDTKLIEA…PQEKNITQLI (66 aa)). The interval 124-157 (KTPKDFNTGSANAAADAGGEDIPDLVDQKFDDVE) is disordered.

The protein belongs to the NAC-beta family. In terms of assembly, part of the nascent polypeptide-associated complex (NAC), consisting of EGD2 and EGD1. NAC associates with ribosomes via EGD1.

It is found in the cytoplasm. The protein resides in the nucleus. Functionally, component of the nascent polypeptide-associated complex (NAC), a dynamic component of the ribosomal exit tunnel, protecting the emerging polypeptides from interaction with other cytoplasmic proteins to ensure appropriate nascent protein targeting. The NAC complex also promotes mitochondrial protein import by enhancing productive ribosome interactions with the outer mitochondrial membrane and blocks the inappropriate interaction of ribosomes translating non-secretory nascent polypeptides with translocation sites in the membrane of the endoplasmic reticulum. EGD1 may act as a transcription factor that exert a negative effect on the expression of several genes that are transcribed by RNA polymerase II. The polypeptide is Nascent polypeptide-associated complex subunit beta (EGD1) (Candida albicans (strain SC5314 / ATCC MYA-2876) (Yeast)).